A 298-amino-acid polypeptide reads, in one-letter code: 4-diphosphocytidyl-2-C-methyl-D-erythritol kinase (298 aa).

Lys19 is a catalytic residue. Residue 106–116 (PVASGIGGGSA) participates in ATP binding. Residue Asp148 is part of the active site.

The protein belongs to the GHMP kinase family. IspE subfamily.

It catalyses the reaction 4-CDP-2-C-methyl-D-erythritol + ATP = 4-CDP-2-C-methyl-D-erythritol 2-phosphate + ADP + H(+). Its pathway is isoprenoid biosynthesis; isopentenyl diphosphate biosynthesis via DXP pathway; isopentenyl diphosphate from 1-deoxy-D-xylulose 5-phosphate: step 3/6. Catalyzes the phosphorylation of the position 2 hydroxy group of 4-diphosphocytidyl-2C-methyl-D-erythritol. This chain is 4-diphosphocytidyl-2-C-methyl-D-erythritol kinase, found in Rhizobium leguminosarum bv. trifolii (strain WSM2304).